The following is a 300-amino-acid chain: MTKASVAIVGSGNISTDLLYKLQRSEWLEPRWMIGIDPESEGLARARTMGLETSAEGVGWLLNQPEKPDLVFEATSAHVHRDSAPRYEAAGIRAVDLTPAAVGPAVVPPANLREHLGAPNVNMITCGGQATIPIVYAVSRVVDVPYAEIVASVASVSAGPGTRANIDEFTKTTSRGIETIGGAQRGKAIIILNPADPPMIMRDTIFCAIPEDADRAAITDSIHRVVADIQQYVPGYRLLNEPQFDDPSVVSGGQATVTTFVEVEGAGDFLPPYAGNLDIMTAAATKVGEEIAQKLLSVEA.

11–14 (SGNI) lines the NAD(+) pocket. Cysteine 126 (acyl-thioester intermediate) is an active-site residue. Residues 157-165 (SAGPGTRAN) and asparagine 276 each bind NAD(+).

Belongs to the acetaldehyde dehydrogenase family.

The catalysed reaction is acetaldehyde + NAD(+) + CoA = acetyl-CoA + NADH + H(+). The protein is Acetaldehyde dehydrogenase 3 of Rhodococcus opacus (strain B4).